Reading from the N-terminus, the 821-residue chain is Leucine--tRNA ligase (821 aa).

The short motif at 40 to 50 (PYPSGRIHMGH) is the 'HIGH' region element. Positions 586–590 (KMSKS) match the 'KMSKS' region motif. Lys589 contacts ATP.

This sequence belongs to the class-I aminoacyl-tRNA synthetase family.

The protein localises to the cytoplasm. It carries out the reaction tRNA(Leu) + L-leucine + ATP = L-leucyl-tRNA(Leu) + AMP + diphosphate. In Aliarcobacter butzleri (strain RM4018) (Arcobacter butzleri), this protein is Leucine--tRNA ligase.